A 192-amino-acid chain; its full sequence is Cytochrome b-245 light chain (192 aa).

The Cytoplasmic segment spans residues 2–7 (GQIEWA). A helical transmembrane segment spans residues 8 to 30 (MWANEQALASGLILITGGIVATA). Residues 31 to 35 (GRFTQ) lie on the Extracellular side of the membrane. Residues 36-53 (WYFGAYSIAAGVLICLLE) form a helical membrane-spanning segment. Topologically, residues 54–69 (YPRGKRKKGSTMERCG) are cytoplasmic. The stretch at 70 to 80 (QKYLTSVVKLF) is an intramembrane region. The Cytoplasmic portion of the chain corresponds to 81–86 (GPLTRN). A helical membrane pass occupies residues 87 to 104 (YYVRAALHFLLSVPAGFL). L105 is a topological domain (extracellular). The helical transmembrane segment at 106 to 126 (ATILGTVCLAIASVIYLLAAI) threads the bilayer. At 127–192 (RGEQWTPIEP…NPMPVTDEVV (66 aa)) the chain is on the cytoplasmic side. The interval 134–192 (IEPKPKERPQVGGTIKQPPTNPPPRPPAEVRKKPSEGEEEAASAGGPQVNPMPVTDEVV) is disordered. T147 bears the Phosphothreonine mark. K149 is covalently cross-linked (Glycyl lysine isopeptide (Lys-Gly) (interchain with G-Cter in ubiquitin)). Residues S168 and S176 each carry the phosphoserine modification.

This sequence belongs to the p22phox family. Component of the phagocyte NADPH oxidase core complex/cytochrome b558 complex, composed of CYBB (heavy chain (beta)) and CYBA (light chain (alpha)). Component of the phagocyte NADPH oxidase complex composed of an obligatory core heterodimer formed by the membrane proteins CYBA and CYBB and the cytosolic regulatory subunits NCF1/p47-phox, NCF2/p67-phox, NCF4/p40-phox and the small GTPase RAC1 or RAC2. Interacts with NCF1 (via SH3 domain). Interacts with SH3PXD2A. Interacts with DUOX1, DUOX2 and TPO. Interacts with NOX4; this interaction mediates superoxide generation. Interacts with calprotectin (S100A8/9). Interacts with GBP7. Interacts with NOXO1. Forms a heterodimer with NOX3 and is essential for activity and cell membrane localization of NOX3. Interacts with NOX1. In terms of processing, ubiquitinated at Lys-149 likely by RNF145. Phosphorylation at Thr-147 enhances NADPH oxidase activity by promoting NCF1/p47-phox binding. As to expression, the strongest level of expression is found in kidney, peritoneal neutrophils and peritoneal macrophages, and a lower level in spleen and small intestine. Very low level of expression can be noted in brain, liver, testis, and heart.

The protein localises to the cell membrane. Subunit of NADPH oxidase complexes that is required for the NADPH oxidase activity that generates, in various cell types, superoxide from molecular oxygen utilizing NADPH as an electron donor. Subunit of the phagocyte NADPH oxidase complex that mediates the transfer of electrons from cytosolic NADPH to O2 to produce the superoxide anion (O2(-)). In the activated complex, electrons are first transferred from NADPH to flavin adenine dinucleotide (FAD) and subsequently transferred via two heme molecules to molecular oxygen, producing superoxide through an outer-sphere reaction. Activation of the NADPH oxidase complex is initiated by the assembly of cytosolic subunits of the NADPH oxidase complex with the core NADPH oxidase complex to form a complex at the plasma membrane or phagosomal membrane. This activation process is initiated by phosphorylation dependent binding of the cytosolic NCF1/p47-phox subunit to the C-terminus of CYBA/p22-phox. Aassociates with NOX3 to form a functional NADPH oxidase constitutively generating superoxide. This chain is Cytochrome b-245 light chain, found in Mus musculus (Mouse).